Reading from the N-terminus, the 504-residue chain is Histidine ammonia-lyase (504 aa).

A cross-link (5-imidazolinone (Ala-Gly)) is located at residues 142 to 144 (ASG). Serine 143 bears the 2,3-didehydroalanine (Ser) mark.

The protein belongs to the PAL/histidase family. In terms of processing, contains an active site 4-methylidene-imidazol-5-one (MIO), which is formed autocatalytically by cyclization and dehydration of residues Ala-Ser-Gly.

The protein resides in the cytoplasm. The catalysed reaction is L-histidine = trans-urocanate + NH4(+). It participates in amino-acid degradation; L-histidine degradation into L-glutamate; N-formimidoyl-L-glutamate from L-histidine: step 1/3. The sequence is that of Histidine ammonia-lyase from Staphylococcus aureus (strain MSSA476).